We begin with the raw amino-acid sequence, 254 residues long: Metalloprotease YcaL (254 aa).

A signal peptide spans 1–19 (MKNTKLLLAIATSAALLTG). Cys-20 is lipidated: N-palmitoyl cysteine. Cys-20 is lipidated: S-diacylglycerol cysteine. Position 134 (His-134) interacts with Zn(2+). The active site involves Glu-135. His-138 and Glu-193 together coordinate Zn(2+). The segment at 227–254 (GRTQSMFDSHPPSTERAQHIRDRIASGK) is disordered. Over residues 242-254 (RAQHIRDRIASGK) the composition is skewed to basic and acidic residues.

This sequence belongs to the peptidase M48B family. Zn(2+) is required as a cofactor.

The protein resides in the cell inner membrane. Involved in the degradation of the LPS-assembly protein LptD. Degrades LptD that have engaged the Bam complex but are stalled at an early step in the outer membrane protein assembly process. In Escherichia coli (strain K12), this protein is Metalloprotease YcaL (ycaL).